Here is a 262-residue protein sequence, read N- to C-terminus: uncharacterized protein (262 aa).

Residues 13 to 35 (VVGALLTVVVIVTAAGIIYVISH) form a helical membrane-spanning segment.

It localises to the membrane. This is an uncharacterized protein from Archaeoglobus fulgidus (strain ATCC 49558 / DSM 4304 / JCM 9628 / NBRC 100126 / VC-16).